Reading from the N-terminus, the 541-residue chain is MSQLVECVPNFSEGNNQEVIDAISQAISQTPGCVLLDVDAGPSTNRTVYTFVGQPECVVEGALSAARTASQLIDMRKHKGEHPRMGALDVCPFIPVRGVSMDECVLCAKAFGQRLAEELNVPVYLYGEAAQMPSRQTLPAIRAGEYEALPEKLKQAEWVPDFGPSSFVPSWGATVTGARKFLIAFNINLLSTKEQAHRIALNLREQGRGKDQPGRLKKVQGIGWYLEEKNLAQVSTNLLDFEVTALHTVYEEARREAQELNLPVVGSQLVGLVPLKALLDAAAFYCDKEKLFVLEEEHRIRLVVNRLGLDSLAPFDPKERIIEYLVPDSGPEQSLLDASLRAFVREVGARSAAPGGGSVAAAVAALGAALASMVGQMTYGRRQFDHLDSTMRRLIPPFHAASAQLTSLVDADARAFAACLGAIKLPKNTPEERDRRTCALQEGLRQAVAVPLKLAETVSQLWPALQELAQCGNLSCLSDLQVAAKALETGVFGAYFNVLINLKDMTDDVFKEKTRHRISSLLQEAKTQAALVLGSLEARKE.

Positions 1–181 are formiminotransferase N-subdomain; that stretch reads MSQLVECVPN…GATVTGARKF (181 aa). The For formimidoyltransferase activity role is filled by His82. 163-172 provides a ligand contact to folate; that stretch reads GPSSFVPSWG. Residues 182 to 326 are formiminotransferase C-subdomain; that stretch reads LIAFNINLLS…PKERIIEYLV (145 aa). A linker region spans residues 327-334; it reads PDSGPEQS. The segment at 335 to 541 is cyclodeaminase/cyclohydrolase; that stretch reads LLDASLRAFV…VLGSLEARKE (207 aa). Asp412 serves as the catalytic For cyclodeaminase activity. Ser520 is subject to Phosphoserine.

In the C-terminal section; belongs to the cyclodeaminase/cyclohydrolase family. This sequence in the N-terminal section; belongs to the formiminotransferase family. In terms of assembly, homooctamer, including four polyglutamate binding sites. The subunits are arranged as a tetramer of dimers, and form a planar ring-shaped structure. As to expression, specifically expressed in liver (at protein level).

Its subcellular location is the cytoplasm. It is found in the cytosol. It localises to the golgi apparatus. The protein localises to the cytoskeleton. The protein resides in the microtubule organizing center. Its subcellular location is the centrosome. It is found in the centriole. It catalyses the reaction 5-formimidoyltetrahydrofolate + L-glutamate = N-formimidoyl-L-glutamate + (6S)-5,6,7,8-tetrahydrofolate. It carries out the reaction 5-formimidoyltetrahydrofolate + 2 H(+) = (6R)-5,10-methenyltetrahydrofolate + NH4(+). It functions in the pathway amino-acid degradation; L-histidine degradation into L-glutamate; L-glutamate from N-formimidoyl-L-glutamate (transferase route): step 1/1. Functionally, folate-dependent enzyme, that displays both transferase and deaminase activity. Serves to channel one-carbon units from formiminoglutamate to the folate pool. In terms of biological role, binds and promotes bundling of vimentin filaments originating from the Golgi. The sequence is that of Formimidoyltransferase-cyclodeaminase (Ftcd) from Rattus norvegicus (Rat).